We begin with the raw amino-acid sequence, 539 residues long: Protein peanut (539 aa).

Ser6 and Ser13 each carry phosphoserine. Residues 29-90 (LRDKQQAASA…GASNGDSNKL (62 aa)) form a disordered region. The segment covering 35–54 (AASASASSATNGSSGSESLV) has biased composition (low complexity). The Septin-type G domain occupies 139–411 (RGFEFTLMVV…ENYRCRKLSE (273 aa)). Positions 149 to 156 (GASGLGKS) are G1 motif. Residues 149–156 (GASGLGKS), Thr183, Gly209, 288–296 (KADTMTPDE), Gly345, and Arg360 each bind GTP. The G3 motif stretch occupies residues 206-209 (DTPG). The interval 287-290 (AKAD) is G4 motif. Positions 420 to 516 (RLSNKNPLTQ…HVTLEELKRR (97 aa)) form a coiled coil. The tract at residues 513–539 (LKRRSLGANSSTDNVDGKKEKKKKGLF) is disordered. Ser517 bears the Phosphoserine mark.

This sequence belongs to the TRAFAC class TrmE-Era-EngA-EngB-Septin-like GTPase superfamily. Septin GTPase family. In terms of assembly, likely part of a multicomponent septin complex that includes Septin1. Interacts with Septin1. Interacts with hil. Interacts with park. In terms of processing, ubiquitinated by park, leading to its degradation by the proteasome. In terms of tissue distribution, accumulates at the leading edge of the cleavage furrow in dividing cells and cellularizing embryos (at protein level).

Its subcellular location is the apical cell membrane. The protein localises to the cleavage furrow. It is found in the cytoplasm. The protein resides in the cell cortex. Functionally, involved in cytokinesis and possibly cellularization. Also acts as an enhancer of the sina gene, thus having a role in photoreceptor development. May be involved in p53-dependent apoptosis. The chain is Protein peanut (pnut) from Drosophila melanogaster (Fruit fly).